We begin with the raw amino-acid sequence, 467 residues long: Uronate isomerase (467 aa).

Belongs to the metallo-dependent hydrolases superfamily. Uronate isomerase family.

It catalyses the reaction D-glucuronate = D-fructuronate. The enzyme catalyses aldehydo-D-galacturonate = keto-D-tagaturonate. It functions in the pathway carbohydrate metabolism; pentose and glucuronate interconversion. This chain is Uronate isomerase, found in Mannheimia succiniciproducens (strain KCTC 0769BP / MBEL55E).